Reading from the N-terminus, the 373-residue chain is UDP-N-acetylglucosamine--N-acetylmuramyl-(pentapeptide) pyrophosphoryl-undecaprenol N-acetylglucosamine transferase (373 aa).

Residues 10–12, Asn124, Ser195, and Gln297 contribute to the UDP-N-acetyl-alpha-D-glucosamine site; that span reads TGG.

It belongs to the glycosyltransferase 28 family. MurG subfamily.

The protein localises to the cell membrane. It carries out the reaction Mur2Ac(oyl-L-Ala-gamma-D-Glu-L-Lys-D-Ala-D-Ala)-di-trans,octa-cis-undecaprenyl diphosphate + UDP-N-acetyl-alpha-D-glucosamine = beta-D-GlcNAc-(1-&gt;4)-Mur2Ac(oyl-L-Ala-gamma-D-Glu-L-Lys-D-Ala-D-Ala)-di-trans,octa-cis-undecaprenyl diphosphate + UDP + H(+). The protein operates within cell wall biogenesis; peptidoglycan biosynthesis. Cell wall formation. Catalyzes the transfer of a GlcNAc subunit on undecaprenyl-pyrophosphoryl-MurNAc-pentapeptide (lipid intermediate I) to form undecaprenyl-pyrophosphoryl-MurNAc-(pentapeptide)GlcNAc (lipid intermediate II). This is UDP-N-acetylglucosamine--N-acetylmuramyl-(pentapeptide) pyrophosphoryl-undecaprenol N-acetylglucosamine transferase from Oenococcus oeni (strain ATCC BAA-331 / PSU-1).